The primary structure comprises 88 residues: Small ribosomal subunit protein bS20 (88 aa).

The disordered stretch occupies residues 1-27 (MANIPSAKKRARQAEKRRKHNQSQRSM). Basic residues predominate over residues 7 to 22 (AKKRARQAEKRRKHNQ).

This sequence belongs to the bacterial ribosomal protein bS20 family.

Functionally, binds directly to 16S ribosomal RNA. The chain is Small ribosomal subunit protein bS20 from Alkalilimnicola ehrlichii (strain ATCC BAA-1101 / DSM 17681 / MLHE-1).